The chain runs to 417 residues: Phosphoglycerate kinase 1 (417 aa).

An N-acetylserine modification is found at Ser-2. Phosphoserine occurs at positions 2 and 4. The segment at 2–186 is globular domain-1; that stretch reads SLSNKLTLDK…VGVNLPQKAG (185 aa). Lys-6 bears the N6-succinyllysine mark. The residue at position 11 (Lys-11) is an N6-acetyllysine. Positions 23, 24, 25, 26, 38, and 39 each coordinate (2R)-3-phosphoglycerate. The mitochondrial targeting region exposed following cis-trans isomerization by PIN1 and recognized by the TOM complex for mitochondrial translocation of the protein stretch occupies residues 38–43; the sequence is QRIKAA. Lys-48 is modified (N6-acetyllysine; alternate). Lys-48 carries the post-translational modification N6-succinyllysine; alternate. Residues Ser-62, His-63, Gly-65, and Arg-66 each coordinate (2R)-3-phosphoglycerate. Lys-75 is subject to N6-acetyllysine. Tyr-76 carries the phosphotyrosine modification. 2 positions are modified to N6-acetyllysine: Lys-86 and Lys-91. The residue at position 97 (Lys-97) is an N6-acetyllysine; alternate. Lys-97 bears the N6-(2-hydroxyisobutyryl)lysine; alternate mark. (2R)-3-phosphoglycerate-binding residues include Leu-122 and Arg-123. Residue Lys-131 is modified to N6-acetyllysine; alternate. Residue Lys-131 is modified to N6-malonyllysine; alternate. Lys-146 bears the N6-acetyllysine mark. (2R)-3-phosphoglycerate is bound by residues His-170 and Arg-171. The interval 187–190 is linker; that stretch reads GFLM. Lys-191 bears the N6-succinyllysine mark. The globular domain-2 stretch occupies residues 191–417; that stretch reads KKELNYFAKA…LPGVDALSNV (227 aa). Phosphotyrosine is present on Tyr-196. Lys-199 is modified (N6-acetyllysine). Ser-203 carries the post-translational modification Phosphoserine. Position 214 (Gly-214) interacts with ADP. Gly-214 lines the CDP pocket. AMP contacts are provided by Ala-215 and Lys-216. Ala-215 provides a ligand contact to ATP. Ala-215 is a binding site for Mg(2+). Lys-216 bears the N6-(2-hydroxyisobutyryl)lysine mark. Mg(2+) is bound by residues Ala-218 and Asp-219. Asp-219 contributes to the CDP binding site. Lys-220 is an AMP binding site. Lys-220 provides a ligand contact to ATP. Residue Lys-220 is modified to N6-(2-hydroxyisobutyryl)lysine. An ADP-binding site is contributed by Gly-238. Position 238 (Gly-238) interacts with CDP. Gly-239 contacts AMP. Position 239 (Gly-239) interacts with ATP. An N6-acetyllysine mark is found at Lys-267 and Lys-291. Gly-313 provides a ligand contact to AMP. Residue Gly-313 coordinates ATP. N6-(2-hydroxyisobutyryl)lysine is present on Lys-323. The CDP site is built by Gly-338, Val-340, and Phe-343. Residue Phe-343 coordinates ADP. Glu-344 provides a ligand contact to AMP. Glu-344 contacts ATP. Lys-361 carries the post-translational modification N6-acetyllysine. Positions 375 and 376 each coordinate ATP. Asp-375 contacts Mg(2+). Positions 406-417 are associated with globular domain 1; sequence KVLPGVDALSNV.

Belongs to the phosphoglycerate kinase family. In terms of assembly, monomer. Interacts with kinase MAPK1/ERK2; the interaction is direct, occurs under hypoxic conditions, and promotes its interaction with PIN1. Interacts with peptidyl-prolyl cis-trans isomerase PIN1; the interaction is direct, occurs under hypoxic conditions, and targets the protein to the mitochondrion by promoting interactions with the TOM complex. Interacts with mitochondrial circRNA mcPGK1 (via its 2nd stem-loop); the interaction is direct and targets the protein to the mitochondrion by promoting interactions with the TOM complex. Interacts with pyruvate dehydrogenase kinase PDK1; the interaction is direct, occurs under hypoxic conditions and leads to PDK1-mediated inhibition of pyruvate dehydrogenase complex activity. Requires Mg(2+) as cofactor. Post-translationally, phosphorylated at Ser-203 by MAPK1/ERK2 under hypoxic conditions, which promotes its mitochondrial targeting.

The protein localises to the cytoplasm. The protein resides in the cytosol. It is found in the mitochondrion matrix. It catalyses the reaction (2R)-3-phosphoglycerate + ATP = (2R)-3-phospho-glyceroyl phosphate + ADP. It carries out the reaction L-seryl-[protein] + ATP = O-phospho-L-seryl-[protein] + ADP + H(+). The protein operates within carbohydrate degradation; glycolysis; pyruvate from D-glyceraldehyde 3-phosphate: step 2/5. Functionally, catalyzes one of the two ATP producing reactions in the glycolytic pathway via the reversible conversion of 1,3-diphosphoglycerate to 3-phosphoglycerate. Both L- and D- forms of purine and pyrimidine nucleotides can be used as substrates, but the activity is much lower on pyrimidines. In addition to its role as a glycolytic enzyme, it seems that PGK-1 acts as a polymerase alpha cofactor protein (primer recognition protein). Acts as a protein kinase when localized to the mitochondrion where it phosphorylates pyruvate dehydrogenase kinase PDK1 to inhibit pyruvate dehydrogenase complex activity and suppress the formation of acetyl-coenzyme A from pyruvate, and consequently inhibit oxidative phosphorylation and promote glycolysis. May play a role in sperm motility. The sequence is that of Phosphoglycerate kinase 1 (PGK1) from Equus caballus (Horse).